Consider the following 157-residue polypeptide: SsrA-binding protein (157 aa).

This sequence belongs to the SmpB family.

It localises to the cytoplasm. Its function is as follows. Required for rescue of stalled ribosomes mediated by trans-translation. Binds to transfer-messenger RNA (tmRNA), required for stable association of tmRNA with ribosomes. tmRNA and SmpB together mimic tRNA shape, replacing the anticodon stem-loop with SmpB. tmRNA is encoded by the ssrA gene; the 2 termini fold to resemble tRNA(Ala) and it encodes a 'tag peptide', a short internal open reading frame. During trans-translation Ala-aminoacylated tmRNA acts like a tRNA, entering the A-site of stalled ribosomes, displacing the stalled mRNA. The ribosome then switches to translate the ORF on the tmRNA; the nascent peptide is terminated with the 'tag peptide' encoded by the tmRNA and targeted for degradation. The ribosome is freed to recommence translation, which seems to be the essential function of trans-translation. This chain is SsrA-binding protein, found in Methylobacterium nodulans (strain LMG 21967 / CNCM I-2342 / ORS 2060).